The primary structure comprises 94 residues: Large ribosomal subunit protein eL42 (94 aa).

Zn(2+)-binding residues include cysteine 11, cysteine 14, cysteine 70, and cysteine 73. The C4-type zinc-finger motif lies at 11–73; sequence CPYCKKHTIH…IDLRFKCTEC (63 aa).

The protein belongs to the eukaryotic ribosomal protein eL42 family. In terms of assembly, part of the 50S ribosomal subunit. Requires Zn(2+) as cofactor.

In terms of biological role, binds to the 23S rRNA. This chain is Large ribosomal subunit protein eL42, found in Methanocaldococcus jannaschii (strain ATCC 43067 / DSM 2661 / JAL-1 / JCM 10045 / NBRC 100440) (Methanococcus jannaschii).